The chain runs to 154 residues: NADPH-dependent 7-cyano-7-deazaguanine reductase (154 aa).

The segment covering 1–23 (MPNTDVSSLSMLGQQTETAQSPE) has biased composition (polar residues). Residues 1 to 26 (MPNTDVSSLSMLGQQTETAQSPEQAV) are disordered. The Thioimide intermediate role is filled by cysteine 52. Aspartate 59 acts as the Proton donor in catalysis. Residues 74 to 76 (VES) and 93 to 94 (HE) contribute to the substrate site.

The protein belongs to the GTP cyclohydrolase I family. QueF type 1 subfamily.

The protein resides in the cytoplasm. It catalyses the reaction 7-aminomethyl-7-carbaguanine + 2 NADP(+) = 7-cyano-7-deazaguanine + 2 NADPH + 3 H(+). It participates in tRNA modification; tRNA-queuosine biosynthesis. Functionally, catalyzes the NADPH-dependent reduction of 7-cyano-7-deazaguanine (preQ0) to 7-aminomethyl-7-deazaguanine (preQ1). The protein is NADPH-dependent 7-cyano-7-deazaguanine reductase of Rhizobium leguminosarum bv. trifolii (strain WSM2304).